Here is a 282-residue protein sequence, read N- to C-terminus: Phosphatidylserine decarboxylase proenzyme (282 aa).

Residues Asp88, His144, and Ser247 each act as charge relay system; for autoendoproteolytic cleavage activity in the active site. Residue Ser247 is the Schiff-base intermediate with substrate; via pyruvic acid; for decarboxylase activity of the active site. A Pyruvic acid (Ser); by autocatalysis modification is found at Ser247.

Belongs to the phosphatidylserine decarboxylase family. PSD-B subfamily. Prokaryotic type I sub-subfamily. Heterodimer of a large membrane-associated beta subunit and a small pyruvoyl-containing alpha subunit. The cofactor is pyruvate. Post-translationally, is synthesized initially as an inactive proenzyme. Formation of the active enzyme involves a self-maturation process in which the active site pyruvoyl group is generated from an internal serine residue via an autocatalytic post-translational modification. Two non-identical subunits are generated from the proenzyme in this reaction, and the pyruvate is formed at the N-terminus of the alpha chain, which is derived from the carboxyl end of the proenzyme. The autoendoproteolytic cleavage occurs by a canonical serine protease mechanism, in which the side chain hydroxyl group of the serine supplies its oxygen atom to form the C-terminus of the beta chain, while the remainder of the serine residue undergoes an oxidative deamination to produce ammonia and the pyruvoyl prosthetic group on the alpha chain. During this reaction, the Ser that is part of the protease active site of the proenzyme becomes the pyruvoyl prosthetic group, which constitutes an essential element of the active site of the mature decarboxylase.

It localises to the cell membrane. The enzyme catalyses a 1,2-diacyl-sn-glycero-3-phospho-L-serine + H(+) = a 1,2-diacyl-sn-glycero-3-phosphoethanolamine + CO2. It participates in phospholipid metabolism; phosphatidylethanolamine biosynthesis; phosphatidylethanolamine from CDP-diacylglycerol: step 2/2. Functionally, catalyzes the formation of phosphatidylethanolamine (PtdEtn) from phosphatidylserine (PtdSer). The chain is Phosphatidylserine decarboxylase proenzyme from Xanthomonas campestris pv. campestris (strain 8004).